A 152-amino-acid polypeptide reads, in one-letter code: Large ribosomal subunit protein uL15 (152 aa).

The interval 1–54 (MGLKLNELSPGVGAKKTAHRKGRGIGSGLGKTGGRGVKGQKSRSGSGVRRGFEG) is disordered. Gly residues predominate over residues 24–37 (GIGSGLGKTGGRGV).

Belongs to the universal ribosomal protein uL15 family. Part of the 50S ribosomal subunit.

In terms of biological role, binds to the 23S rRNA. This Psychrobacter sp. (strain PRwf-1) protein is Large ribosomal subunit protein uL15.